A 500-amino-acid chain; its full sequence is Na(+)/H(+) antiporter NhaB (500 aa).

The next 12 helical transmembrane spans lie at Phe28–Gly50, Gly68–Ala88, Leu98–Phe118, Leu121–Leu141, Phe145–Val165, Leu205–Pro225, Gln244–Glu264, Val311–Ile331, Phe350–Ile370, Met394–Ile414, Val449–Leu469, and Met477–Ser497.

This sequence belongs to the NhaB Na(+)/H(+) (TC 2.A.34) antiporter family.

Its subcellular location is the cell inner membrane. It carries out the reaction 2 Na(+)(in) + 3 H(+)(out) = 2 Na(+)(out) + 3 H(+)(in). Functionally, na(+)/H(+) antiporter that extrudes sodium in exchange for external protons. The sequence is that of Na(+)/H(+) antiporter NhaB from Pseudomonas aeruginosa (strain LESB58).